Consider the following 95-residue polypeptide: Integration host factor subunit beta (95 aa).

Belongs to the bacterial histone-like protein family. In terms of assembly, heterodimer of an alpha and a beta chain.

Functionally, this protein is one of the two subunits of integration host factor, a specific DNA-binding protein that functions in genetic recombination as well as in transcriptional and translational control. Involved in hydrogenase gene expression. This Rhodobacter capsulatus (Rhodopseudomonas capsulata) protein is Integration host factor subunit beta (ihfB).